The chain runs to 69 residues: MSVLTPLLLRGLTGSARRLPVPCARVHSKPPREQLGTMDIAIGLTSCFVCFLLPSGWVLSHLENYKKRE.

The transit peptide at 1–25 (MSVLTPLLLRGLTGSARRLPVPCAR) directs the protein to the mitochondrion. The SIFI-degron signature appears at 2-19 (SVLTPLLLRGLTGSARRL). The Mitochondrial matrix segment spans residues 26 to 36 (VHSKPPREQLG). The helical transmembrane segment at 37–60 (TMDIAIGLTSCFVCFLLPSGWVLS) threads the bilayer. Residues 61 to 69 (HLENYKKRE) are Mitochondrial intermembrane-facing.

Belongs to the cytochrome c oxidase VIII family. Component of the cytochrome c oxidase (complex IV, CIV), a multisubunit enzyme composed of 14 subunits. The complex is composed of a catalytic core of 3 subunits MT-CO1, MT-CO2 and MT-CO3, encoded in the mitochondrial DNA, and 11 supernumerary subunits COX4I, COX5A, COX5B, COX6A, COX6B, COX6C, COX7A, COX7B, COX7C, COX8 and NDUFA4, which are encoded in the nuclear genome. The complex exists as a monomer or a dimer and forms supercomplexes (SCs) in the inner mitochondrial membrane with NADH-ubiquinone oxidoreductase (complex I, CI) and ubiquinol-cytochrome c oxidoreductase (cytochrome b-c1 complex, complex III, CIII), resulting in different assemblies (supercomplex SCI(1)III(2)IV(1) and megacomplex MCI(2)III(2)IV(2)). In response to mitochondrial stress, the precursor protein is ubiquitinated by the SIFI complex in the cytoplasm before mitochondrial import, leading to its degradation. Within the SIFI complex, UBR4 initiates ubiquitin chain that are further elongated or branched by KCMF1.

The protein resides in the mitochondrion inner membrane. Its pathway is energy metabolism; oxidative phosphorylation. Its function is as follows. Component of the cytochrome c oxidase, the last enzyme in the mitochondrial electron transport chain which drives oxidative phosphorylation. The respiratory chain contains 3 multisubunit complexes succinate dehydrogenase (complex II, CII), ubiquinol-cytochrome c oxidoreductase (cytochrome b-c1 complex, complex III, CIII) and cytochrome c oxidase (complex IV, CIV), that cooperate to transfer electrons derived from NADH and succinate to molecular oxygen, creating an electrochemical gradient over the inner membrane that drives transmembrane transport and the ATP synthase. Cytochrome c oxidase is the component of the respiratory chain that catalyzes the reduction of oxygen to water. Electrons originating from reduced cytochrome c in the intermembrane space (IMS) are transferred via the dinuclear copper A center (CU(A)) of subunit 2 and heme A of subunit 1 to the active site in subunit 1, a binuclear center (BNC) formed by heme A3 and copper B (CU(B)). The BNC reduces molecular oxygen to 2 water molecules using 4 electrons from cytochrome c in the IMS and 4 protons from the mitochondrial matrix. This chain is Cytochrome c oxidase subunit 8A, mitochondrial (COX8A), found in Otolemur crassicaudatus (Brown greater galago).